The sequence spans 139 residues: D-ribose pyranase (139 aa).

Catalysis depends on His-20, which acts as the Proton donor. Residues Asp-28, His-106, and 128-130 contribute to the substrate site; that span reads YAN.

The protein belongs to the RbsD / FucU family. RbsD subfamily. In terms of assembly, homodecamer.

It is found in the cytoplasm. It catalyses the reaction beta-D-ribopyranose = beta-D-ribofuranose. It functions in the pathway carbohydrate metabolism; D-ribose degradation; D-ribose 5-phosphate from beta-D-ribopyranose: step 1/2. Functionally, catalyzes the interconversion of beta-pyran and beta-furan forms of D-ribose. The chain is D-ribose pyranase from Pasteurella multocida (strain Pm70).